A 304-amino-acid polypeptide reads, in one-letter code: UDP-3-O-acyl-N-acetylglucosamine deacetylase (304 aa).

Zn(2+)-binding residues include H78, H237, and D241. H264 (proton donor) is an active-site residue.

The protein belongs to the LpxC family. It depends on Zn(2+) as a cofactor.

It catalyses the reaction a UDP-3-O-[(3R)-3-hydroxyacyl]-N-acetyl-alpha-D-glucosamine + H2O = a UDP-3-O-[(3R)-3-hydroxyacyl]-alpha-D-glucosamine + acetate. The protein operates within glycolipid biosynthesis; lipid IV(A) biosynthesis; lipid IV(A) from (3R)-3-hydroxytetradecanoyl-[acyl-carrier-protein] and UDP-N-acetyl-alpha-D-glucosamine: step 2/6. In terms of biological role, catalyzes the hydrolysis of UDP-3-O-myristoyl-N-acetylglucosamine to form UDP-3-O-myristoylglucosamine and acetate, the committed step in lipid A biosynthesis. This Polynucleobacter asymbioticus (strain DSM 18221 / CIP 109841 / QLW-P1DMWA-1) (Polynucleobacter necessarius subsp. asymbioticus) protein is UDP-3-O-acyl-N-acetylglucosamine deacetylase.